Reading from the N-terminus, the 81-residue chain is Protein Vpu (81 aa).

Residues 1-7 lie on the Extracellular side of the membrane; that stretch reads MQPLVII. The helical transmembrane segment at 8–28 threads the bilayer; it reads AIAALVVAIIIAIVVWTIVYI. Residues 29–81 are Cytoplasmic-facing; sequence EYRRIKRQRKIDCLIDRIRERAEDSGNESEGEREELSKLVEMGHHAPWDVDDL. The disordered stretch occupies residues 50-81; sequence AEDSGNESEGEREELSKLVEMGHHAPWDVDDL. 2 positions are modified to phosphoserine; by host CK2: S53 and S57. Residues 62-81 show a composition bias toward basic and acidic residues; it reads EELSKLVEMGHHAPWDVDDL.

This sequence belongs to the HIV-1 VPU protein family. Homopentamer. Interacts with host CD4 and BRTC; these interactions induce proteasomal degradation of CD4. Interacts with host BST2; this interaction leads to the degradation of host BST2. Interacts with host FBXW11. Interacts with host AP1M1; this interaction plays a role in the mistrafficking and subsequent degradation of host BST2. Interacts with host RANBP2; this interaction allows Vpu to down-regulate host BLM sumoylation. In terms of processing, phosphorylated by host CK2. This phosphorylation is necessary for interaction with human BTRC and degradation of CD4.

It localises to the host membrane. With respect to regulation, ion channel activity is inhibited by hexamethylene amiloride in vitro. Its function is as follows. Enhances virion budding by targeting host CD4 and Tetherin/BST2 to proteasome degradation. Degradation of CD4 prevents any unwanted premature interactions between viral Env and its host receptor CD4 in the endoplasmic reticulum. Degradation of antiretroviral protein Tetherin/BST2 is important for virion budding, as BST2 tethers new viral particles to the host cell membrane. Mechanistically, Vpu bridges either CD4 or BST2 to BTRC, a substrate recognition subunit of the Skp1/Cullin/F-box protein E3 ubiquitin ligase, induces their ubiquitination and subsequent proteasomal degradation. The alteration of the E3 ligase specificity by Vpu seems to promote the degradation of host IKBKB, leading to NF-kappa-B down-regulation and subsequent apoptosis. Acts as a viroporin that forms an oligomeric ion channel in membranes. Modulates the host DNA repair mechanisms to promote degradation of nuclear viral cDNA in cells that are already productively infected in order to suppress immune sensing and proviral hyper-integration (superinfection). Manipulates PML-NBs and modulates SUMOylation of host BLM protein thereby enhancing its DNA-end processing activity toward viral unintegrated linear DNA. Also inhibits RAD52-mediated homologous repair of viral cDNA, preventing the generation of dead-end circular forms of single copies of the long terminal repeat and permitting sustained nucleolytic attack. This chain is Protein Vpu, found in Human immunodeficiency virus type 1 group M subtype D (isolate NDK) (HIV-1).